Here is a 57-residue protein sequence, read N- to C-terminus: UPF0057 membrane protein T23F2.4 (57 aa).

A run of 2 helical transmembrane segments spans residues 3-23 (ITCMDIPKFLFALLLPPVGVF) and 36-56 (ILLTILGYIPGIIYACYIILA).

It belongs to the UPF0057 (PMP3) family.

It localises to the membrane. This is UPF0057 membrane protein T23F2.4 from Caenorhabditis elegans.